Consider the following 387-residue polypeptide: Succinate--CoA ligase [ADP-forming] subunit beta (387 aa).

ATP contacts are provided by residues Lys46, 53-55, Glu99, Ala102, and Glu107; that span reads GRG. 2 residues coordinate Mg(2+): Asn199 and Asp213. Substrate is bound by residues Asn264 and 321 to 323; that span reads GIV.

It belongs to the succinate/malate CoA ligase beta subunit family. As to quaternary structure, heterotetramer of two alpha and two beta subunits. Mg(2+) serves as cofactor.

It carries out the reaction succinate + ATP + CoA = succinyl-CoA + ADP + phosphate. It catalyses the reaction GTP + succinate + CoA = succinyl-CoA + GDP + phosphate. The protein operates within carbohydrate metabolism; tricarboxylic acid cycle; succinate from succinyl-CoA (ligase route): step 1/1. Its function is as follows. Succinyl-CoA synthetase functions in the citric acid cycle (TCA), coupling the hydrolysis of succinyl-CoA to the synthesis of either ATP or GTP and thus represents the only step of substrate-level phosphorylation in the TCA. The beta subunit provides nucleotide specificity of the enzyme and binds the substrate succinate, while the binding sites for coenzyme A and phosphate are found in the alpha subunit. The sequence is that of Succinate--CoA ligase [ADP-forming] subunit beta from Campylobacter jejuni (strain RM1221).